Consider the following 200-residue polypeptide: Small ribosomal subunit protein uS4 (200 aa).

Residues 22-42 are disordered; the sequence is TGKELEKRPYAPGPHGPNQRK. The S4 RNA-binding domain maps to 92-152; that stretch reads ARLDNLVYRM…EKSNNLVVVK (61 aa).

The protein belongs to the universal ribosomal protein uS4 family. In terms of assembly, part of the 30S ribosomal subunit. Contacts protein S5. The interaction surface between S4 and S5 is involved in control of translational fidelity.

One of the primary rRNA binding proteins, it binds directly to 16S rRNA where it nucleates assembly of the body of the 30S subunit. Functionally, with S5 and S12 plays an important role in translational accuracy. This is Small ribosomal subunit protein uS4 from Bacillus cereus (strain Q1).